Consider the following 335-residue polypeptide: Biotin synthase (335 aa).

The 227-residue stretch at 43–269 (YFGKKVKLNM…INPTKEIRIA (227 aa)) folds into the Radical SAM core domain. The [4Fe-4S] cluster site is built by C61, C65, and C68. Residues C104, C137, C197, and R267 each contribute to the [2Fe-2S] cluster site.

Belongs to the radical SAM superfamily. Biotin synthase family. As to quaternary structure, homodimer. [4Fe-4S] cluster serves as cofactor. [2Fe-2S] cluster is required as a cofactor.

It catalyses the reaction (4R,5S)-dethiobiotin + (sulfur carrier)-SH + 2 reduced [2Fe-2S]-[ferredoxin] + 2 S-adenosyl-L-methionine = (sulfur carrier)-H + biotin + 2 5'-deoxyadenosine + 2 L-methionine + 2 oxidized [2Fe-2S]-[ferredoxin]. It functions in the pathway cofactor biosynthesis; biotin biosynthesis; biotin from 7,8-diaminononanoate: step 2/2. Catalyzes the conversion of dethiobiotin (DTB) to biotin by the insertion of a sulfur atom into dethiobiotin via a radical-based mechanism. The chain is Biotin synthase from Staphylococcus aureus (strain MSSA476).